Here is a 92-residue protein sequence, read N- to C-terminus: Protein S100-A5 (92 aa).

EF-hand domains lie at Met12–Met47 and Met47–Ala82. Positions 28, 33, 60, 62, 64, 66, and 71 each coordinate Ca(2+).

It belongs to the S-100 family. As to quaternary structure, homodimer.

Functionally, binds calcium, zinc and copper. One subunit can simultaneously bind 2 calcium ions or 2 copper ions plus 1 zinc ion. Calcium and copper ions compete for the same binding sites. The chain is Protein S100-A5 (S100A5) from Homo sapiens (Human).